Reading from the N-terminus, the 76-residue chain is Paralithocin 3 (76 aa).

A signal peptide spans Met-1–Ala-23. 4 disulfide bridges follow: Cys-31–Cys-62, Cys-40–Cys-58, Cys-44–Cys-56, and Cys-49–Cys-59. Pro-74 carries the proline amide; partial modification.

It belongs to the paralithocin family. In terms of processing, the amidated form is probably the active form.

In terms of biological role, has antibacterial activity, mainly against marine Gram-positive bacteria like C.maltaromaticum (MIC=25 uM), C.mobile (MIC=12.5 uM), C.divergens (MIC=25 uM) and C.funditum (MIC=12.5 uM) but also against C.glutamicum (MIC=12.5 uM). Has very little or no activity against Gram-negative bacteria. This is Paralithocin 3 from Paralithodes camtschaticus (Red king crab).